Consider the following 122-residue polypeptide: Large ribosomal subunit protein uL14 (122 aa).

Belongs to the universal ribosomal protein uL14 family. In terms of assembly, part of the 50S ribosomal subunit. Forms a cluster with proteins L3 and L19. In the 70S ribosome, L14 and L19 interact and together make contacts with the 16S rRNA in bridges B5 and B8.

Its function is as follows. Binds to 23S rRNA. Forms part of two intersubunit bridges in the 70S ribosome. This is Large ribosomal subunit protein uL14 from Clavibacter michiganensis subsp. michiganensis (strain NCPPB 382).